A 382-amino-acid polypeptide reads, in one-letter code: Lipid-A-disaccharide synthase (382 aa).

Belongs to the LpxB family.

It catalyses the reaction 2-N,3-O-bis[(3R)-3-hydroxytetradecanoyl]-alpha-D-glucosaminyl 1-phosphate + UDP-2-N,3-O-bis[(3R)-3-hydroxytetradecanoyl]-alpha-D-glucosamine = lipid A disaccharide (E. coli) + UDP + H(+). The catalysed reaction is a lipid X + a UDP-2-N,3-O-bis[(3R)-3-hydroxyacyl]-alpha-D-glucosamine = a lipid A disaccharide + UDP + H(+). It participates in glycolipid biosynthesis; lipid IV(A) biosynthesis; lipid IV(A) from (3R)-3-hydroxytetradecanoyl-[acyl-carrier-protein] and UDP-N-acetyl-alpha-D-glucosamine: step 5/6. Functionally, condensation of UDP-2,3-diacylglucosamine and 2,3-diacylglucosamine-1-phosphate to form lipid A disaccharide, a precursor of lipid A, a phosphorylated glycolipid that anchors the lipopolysaccharide to the outer membrane of the cell. This chain is Lipid-A-disaccharide synthase, found in Escherichia coli O8 (strain IAI1).